The chain runs to 398 residues: MVIKPRVRGFICVTTHPVGCEANVKQQIDYVTQQGAIDAGPKNVLVLGASTGYGLAARITAAFGCGANTLGVFFERGSVDGKLGTAGWYNTAAFHKFAEEKGLYAKSINGDAFSDAVKAETIETIKRDLGKIDLVVYSLAAPRRTHPKTGEVLSSTLKPLGKSVTLRGVDTDKEIVKETTLQPATQEEIDGTVAVMGGEDWQMWIDALHEAGVLAEGAKTTAFTYLGEKLTHDIYWNGSIGEAKKDLDQKVIGMRQQLAGLGGDARVSVLKAVVTQASSAIPIMPLYLSLLFKVMKEQGSHEGCIEQVYGLYKDSLYNSEPVIDQEGRLRADYKELQPAVQDRVKQLWDQVTSENLYEMTDFVGYKQEFLRLFGFEIEGVDYEADVDPDVKISNLIQL.

NAD(+) is bound by residues 48–53, 74–75, 111–112, and 139–140; these read GASTGY, FE, DA, and LA. Substrate is bound at residue tyrosine 225. Residue tyrosine 235 is the Proton donor of the active site. Residues lysine 244 and 273-275 contribute to the NAD(+) site; that span reads VVT.

The protein belongs to the TER reductase family. Monomer.

The catalysed reaction is a 2,3-saturated acyl-[ACP] + NAD(+) = a (2E)-enoyl-[ACP] + NADH + H(+). The protein operates within lipid metabolism; fatty acid biosynthesis. Involved in the final reduction of the elongation cycle of fatty acid synthesis (FAS II). Catalyzes the reduction of a carbon-carbon double bond in an enoyl moiety that is covalently linked to an acyl carrier protein (ACP). This Pseudomonas fluorescens (strain ATCC BAA-477 / NRRL B-23932 / Pf-5) protein is Enoyl-[acyl-carrier-protein] reductase [NADH].